The following is a 203-amino-acid chain: Phosphatidylethanolamine N-methyltransferase (203 aa).

It catalyses the reaction a 1,2-diacyl-sn-glycero-3-phosphoethanolamine + S-adenosyl-L-methionine = a 1,2-diacyl-sn-glycero-3-phospho-N-methylethanolamine + S-adenosyl-L-homocysteine + H(+). Its pathway is phospholipid metabolism; phosphatidylcholine biosynthesis. This enzyme catalyzes three distinct methylation reactions for converting phosphatidylethanolamine to phosphatidylcholine. This Cereibacter sphaeroides (Rhodobacter sphaeroides) protein is Phosphatidylethanolamine N-methyltransferase (pmtA).